A 737-amino-acid polypeptide reads, in one-letter code: MSSGDPPSGLQASGSNSSAALGLSPPSAPSGKSAATPPKVATDDASVELSSMKSERSPAKSIPLGEDIMQVARIGEVSVMQKLFDEKKFTANYSDEEGITPLHWAAINNQYAMCKFLIDSGADVNAKGGESVATPAMWAAQRCHYYIVHLLLQYGADPLLTDVQGYNILHLATIDGNAFLLVLLLHQEIPVDVVDQQGHTGLMWAAYKGYPACVDLFLRWGANPNAVDDGGLAPLHWALVKGSLPCVLKILEYGADRFATTTDGKTPALVAQEMNTRHVWYRALSECGYDADGNRKVLPMGLGPYVRDKAIMSKFFFFWPFLLLFVVLWILSNMVVYFAIPVAAVAVFGLQWVAKKAASQGPSEFRIIQKTPFLAGVFAGSLFWVFVRYVLYVLPATYSTNPFLNLGFVVFFSLTTYFYFYSMVADPGYVPKLGSRNEQRAVIGQLFEEWKFDEENFCVYCMIRRPLRSKHCRRCSRCVAKHDHHCPWIDNCVGVNNLRQFVLYILCLEIGIILFLHLTFNYINGLPAPAEPICNILNDQICSFVLRDTFTLLLDVWIAIQLVWVTMLGVVQLVQVSRNQTTYENMRGHSLDRGHSSTRAFASAVTAGTTSLDAAGLSASGQGPNPALAQGGHRHRGGCLKQWSSLLGFDTFFATARDGLRDGPRAARPRNPFSRGIVTNCRDFWCDPAPYFGKREPGSAMLGGEIVNYNRMYETPSRMYSSGDYRSVAYDEAADIV.

The segment at 1–60 is disordered; that stretch reads MSSGDPPSGLQASGSNSSAALGLSPPSAPSGKSAATPPKVATDDASVELSSMKSERSPAK. Residues 1-314 lie on the Cytoplasmic side of the membrane; the sequence is MSSGDPPSGL…YVRDKAIMSK (314 aa). The segment covering 7–38 has biased composition (low complexity); it reads PSGLQASGSNSSAALGLSPPSAPSGKSAATPP. 5 ANK repeats span residues 97-126, 131-160, 164-193, 197-226, and 230-259; these read EGIT…DVNA, SVAT…DPLL, QGYN…PVDV, QGHT…NPNA, and GGLA…DRFA. The next 2 helical transmembrane spans lie at 315–335 and 336–356; these read FFFF…SNMV and VYFA…VAKK. Residues 357–372 lie on the Cytoplasmic side of the membrane; it reads AASQGPSEFRIIQKTP. A helical transmembrane segment spans residues 373–393; sequence FLAGVFAGSLFWVFVRYVLYV. Topologically, residues 394 to 402 are lumenal; it reads LPATYSTNP. The helical transmembrane segment at 403-423 threads the bilayer; the sequence is FLNLGFVVFFSLTTYFYFYSM. Residues 424 to 500 are Cytoplasmic-facing; it reads VADPGYVPKL…NCVGVNNLRQ (77 aa). The region spanning 456–506 is the DHHC domain; sequence NFCVYCMIRRPLRSKHCRRCSRCVAKHDHHCPWIDNCVGVNNLRQFVLYIL. Cys-486 functions as the S-palmitoyl cysteine intermediate in the catalytic mechanism. A helical transmembrane segment spans residues 501–521; the sequence is FVLYILCLEIGIILFLHLTFN. At 522-549 the chain is on the lumenal side; the sequence is YINGLPAPAEPICNILNDQICSFVLRDT. A helical transmembrane segment spans residues 550 to 570; that stretch reads FTLLLDVWIAIQLVWVTMLGV. Residues 571–737 are Cytoplasmic-facing; sequence VQLVQVSRNQ…VAYDEAADIV (167 aa).

The protein belongs to the DHHC palmitoyltransferase family. AKR/ZDHHC17 subfamily.

It localises to the early endosome membrane. The protein resides in the golgi apparatus membrane. The catalysed reaction is L-cysteinyl-[protein] + hexadecanoyl-CoA = S-hexadecanoyl-L-cysteinyl-[protein] + CoA. Palmitoyltransferase specific for casein kinase 1. The polypeptide is Palmitoyltransferase akr1 (akr1) (Emericella nidulans (strain FGSC A4 / ATCC 38163 / CBS 112.46 / NRRL 194 / M139) (Aspergillus nidulans)).